The following is a 616-amino-acid chain: Spastin (616 aa).

A disordered region spans residues 1 to 43; that stretch reads MNSPGGRGKKKGSGGASNPVPPRPPPPCLAPAPPAAGPAPPPE. The segment at 1–50 is required for nuclear localization; it reads MNSPGGRGKKKGSGGASNPVPPRPPPPCLAPAPPAAGPAPPPESPHKRNL. The Cytoplasmic portion of the chain corresponds to 1–56; sequence MNSPGGRGKKKGSGGASNPVPPRPPPPCLAPAPPAAGPAPPPESPHKRNLYYFSYP. Residues 1-80 form a required for interaction with ATL1 region; sequence MNSPGGRGKK…LGLLFVWLCQ (80 aa). The interval 1 to 194 is required for midbody localization; sequence MNSPGGRGKK…LVMAKDRLQL (194 aa). Positions 1–300 are required for interaction with RTN1; it reads MNSPGGRGKK…GTPKTNRTNK (300 aa). The short motif at 4–11 is the Nuclear localization signal element; it reads PGGRGKKK. The span at 19 to 43 shows a compositional bias: pro residues; sequence PVPPRPPPPCLAPAPPAAGPAPPPE. A required for interaction with SSNA1 and microtubules region spans residues 50–87; it reads LYYFSYPLFVGFALLRLVAFHLGLLFVWLCQRFSRALM. Residues 57 to 77 constitute an intramembrane region (helical); that stretch reads LFVGFALLRLVAFHLGLLFVW. The Nuclear export signal motif lies at 59–67; the sequence is VGFALLRLV. Residues 78 to 616 are Cytoplasmic-facing; the sequence is LCQRFSRALM…WNKDFGDTTV (539 aa). The interval 112–196 is sufficient for interaction with CHMP1B; sequence EAERVRVFHK…MAKDRLQLLE (85 aa). The tract at residues 114–200 is required for interaction with microtubules; the sequence is ERVRVFHKQA…RLQLLEKMQP (87 aa). Residues 120 to 195 form the MIT domain; that stretch reads HKQAFEYISI…VMAKDRLQLL (76 aa). The interval 224–266 is disordered; that stretch reads HLQSESGAVPKRKDPLTHTSNSLPRSKTVMKTGSAGLSGHHRA. A sufficient for microtubule severing region spans residues 228–616; that stretch reads ESGAVPKRKD…WNKDFGDTTV (389 aa). Residues 240-254 are compositionally biased toward polar residues; it reads THTSNSLPRSKTVMK. 2 positions are modified to phosphoserine: Ser245 and Ser268. The required for interaction with microtubules and microtubule severing stretch occupies residues 270–328; it reads SGLSMVSGVKQGSGPAPTTHKGTPKTNRTNKPSTPTTATRKKKDLKNFRNVDSNLANLI. A disordered region spans residues 278–312; that stretch reads VKQGSGPAPTTHKGTPKTNRTNKPSTPTTATRKKK. Residues 289 to 307 show a composition bias toward polar residues; that stretch reads HKGTPKTNRTNKPSTPTTA. Thr306 carries the phosphothreonine modification. Residues 309-312 carry the Nuclear localization signal motif; that stretch reads RKKK. Positions 310–312 are required for interaction with microtubules; the sequence is KKK. 382–389 provides a ligand contact to ATP; that stretch reads GPPGNGKT. Ser597 bears the Phosphoserine mark.

It belongs to the AAA ATPase family. Spastin subfamily. In terms of assembly, homohexamer. Mostly monomeric, but assembles into hexameric structure for short periods of time. Oligomerization seems to be a prerequisite for catalytic activity. Binding to ATP in a cleft between two adjacent subunits stabilizes the homohexameric form. Binds to microtubules at least in part via the alpha-tubulin and beta-tubulin tails. The hexamer adopts a ring conformation through which microtubules pass prior to being severed. Does not interact strongly with tubulin heterodimers. Interacts (via MIT domain) with CHMP1B; the interaction is direct. Interacts with SSNA1. Interacts with ATL1. Interacts with RTN1. Interacts with ZFYVE27. Isoform 1 but not isoform 3 interacts with RTN2. Interacts with REEP1. Interacts (via MIT domain) with IST1. Expressed in brain, heart, kidney, liver, lung, pancreas, placenta and skeletal muscle. The short isoforms may predominate in brain and spinal cord.

It is found in the membrane. It localises to the endoplasmic reticulum. Its subcellular location is the midbody. The protein localises to the cytoplasm. The protein resides in the cytoskeleton. It is found in the microtubule organizing center. It localises to the centrosome. Its subcellular location is the perinuclear region. The protein localises to the nucleus. The protein resides in the spindle. It is found in the cell projection. It localises to the axon. Its subcellular location is the endoplasmic reticulum membrane. The protein localises to the nucleus membrane. The protein resides in the lipid droplet. It is found in the endosome. The catalysed reaction is n ATP + n H2O + a microtubule = n ADP + n phosphate + (n+1) alpha/beta tubulin heterodimers.. Its activity is regulated as follows. Allosteric enzyme with a cooperative mechanism; at least two neighbor subunits influence each other strongly in spastin hexamers. Microtubule binding promotes cooperative interactions among spastin subunits. ATP-bound enzyme interacts strongly and cooperatively with microtubules; this interaction stimulates ATP hydrolysis. ATP-dependent microtubule severing protein that specifically recognizes and cuts microtubules that are polyglutamylated. Preferentially recognizes and acts on microtubules decorated with short polyglutamate tails: severing activity increases as the number of glutamates per tubulin rises from one to eight, but decreases beyond this glutamylation threshold. Severing activity is not dependent on tubulin acetylation or detyrosination. Microtubule severing promotes reorganization of cellular microtubule arrays and the release of microtubules from the centrosome following nucleation. It is critical for the biogenesis and maintenance of complex microtubule arrays in axons, spindles and cilia. SPAST is involved in abscission step of cytokinesis and nuclear envelope reassembly during anaphase in cooperation with the ESCRT-III complex. Recruited at the midbody, probably by IST1, and participates in membrane fission during abscission together with the ESCRT-III complex. Recruited to the nuclear membrane by IST1 and mediates microtubule severing, promoting nuclear envelope sealing and mitotic spindle disassembly during late anaphase. Required for membrane traffic from the endoplasmic reticulum (ER) to the Golgi and endosome recycling. Recruited by IST1 to endosomes and regulates early endosomal tubulation and recycling by mediating microtubule severing. Probably plays a role in axon growth and the formation of axonal branches. In terms of biological role, involved in lipid metabolism by regulating the size and distribution of lipid droplets. This is Spastin from Homo sapiens (Human).